Consider the following 316-residue polypeptide: HTH-type transcriptional regulator PecT (316 aa).

Residues 11–68 (LDLDLLRTFVAVADLNTFAAAAVAVCRTQSAVSQQMQRLEQLIGKELFARHGRNKLLT) enclose the HTH lysR-type domain. The H-T-H motif DNA-binding region spans 28–47 (FAAAAVAVCRTQSAVSQQMQ). The segment at 293 to 316 (LPVSTGTESELREPPTDESLKDIT) is disordered. Residues 301–316 (SELREPPTDESLKDIT) show a composition bias toward basic and acidic residues.

It belongs to the LysR transcriptional regulatory family.

Regulates pectinase gene expression. The protein is HTH-type transcriptional regulator PecT (pecT) of Dickeya dadantii (strain 3937) (Erwinia chrysanthemi (strain 3937)).